We begin with the raw amino-acid sequence, 751 residues long: Dachshund homolog 1 (751 aa).

A disordered region spans residues 1–178; the sequence is MAVPAALIPP…PSPVENTPQN (178 aa). 2 stretches are compositionally biased toward low complexity: residues 20–53 and 61–74; these read ISTS…SGPT and ASSA…TVTS. Gly residues-rich tracts occupy residues 75 to 97 and 107 to 119; these read PGGG…GGGS and SSGG…GGGA. The segment covering 120-156 has biased composition (low complexity); the sequence is SSTPITASTGSSSSSSSSSSSSSSSSSSSSSSSSSSS. A compositionally biased stretch (polar residues) spans 167–178; that stretch reads STPSPVENTPQN. Positions 182 to 268 are DACHbox-N; sequence KMVDLRGAKV…LISRKDFETL (87 aa). The segment at 182-377 is interaction with SIX6 and HDAC3; that stretch reads KMVDLRGAKV…VGSSGGSWDK (196 aa). Disordered regions lie at residues 273–295, 351–393, 467–525, and 537–556; these read TNAS…PENS, SNNQ…APVA, SPPS…RIPV, and MGLS…AGHD. Polar residues-rich tracts occupy residues 285–294 and 351–369; these read RTQSVTSPEN and SNNQ…SSVG. Ser484 carries the phosphoserine modification. Positions 499 to 517 are enriched in low complexity; sequence SHPSSHRSSSVSSSPARTE. The tract at residues 609 to 689 is DACHbox-C; the sequence is SSIETLLTNI…KAKRKLQEAL (81 aa). The segment at 620-699 is interaction with SIN3A; sequence GLLKVAIDNA…EFETKRREQA (80 aa). The stretch at 623–711 forms a coiled coil; it reads KVAIDNARAQ…TLKQAASADS (89 aa).

This sequence belongs to the DACH/dachshund family. In terms of assembly, interacts with SIX1, SIX6 and EYA3. Interacts with NCOR1 and HDAC3 through its N-terminus. Interacts with SIN3A through its C-terminus. Interacts with SMAD3 and SMAD4. Expressed at higher levels in adult kidney and lung, and at lower levels in brain and testis. Expressed in embryonal kidneys, eyes, cochleae and limb buds.

The protein resides in the nucleus. In terms of biological role, transcription factor that is involved in regulation of organogenesis. Seems to be a regulator of SIX1, SIX6 and probably SIX5. Corepression of precursor cell proliferation in myoblasts by SIX1 is switched to coactivation through recruitment of EYA3 to the SIX1-DACH1 complex. Transcriptional activation also seems to involve association of CREBBP. Seems to act as a corepressor of SIX6 in regulating proliferation by directly repressing cyclin-dependent kinase inhibitors, including the p27Kip1 promoter. Inhibits TGF-beta signaling through interaction with SMAD4 and NCOR1. Binds to chromatin DNA via its DACHbox-N domain. In Mus musculus (Mouse), this protein is Dachshund homolog 1 (Dach1).